Reading from the N-terminus, the 252-residue chain is Probable truncated L-gulonolactone oxidase 7, mitochondrial (252 aa).

Residues 1–102 constitute a mitochondrion transit peptide; it reads MKRSMRSHLA…ELNYGVLVRY (102 aa).

The protein belongs to the oxygen-dependent FAD-linked oxidoreductase family.

It is found in the mitochondrion. The catalysed reaction is L-gulono-1,4-lactone + O2 = L-ascorbate + H2O2 + H(+). It participates in cofactor biosynthesis; L-ascorbate biosynthesis. In terms of biological role, may be involved in the biosynthesis of ascorbic acid. This Arabidopsis thaliana (Mouse-ear cress) protein is Probable truncated L-gulonolactone oxidase 7, mitochondrial.